The chain runs to 585 residues: Arginine--tRNA ligase (585 aa).

A 'HIGH' region motif is present at residues 131–141 (ANPTGPMHVGH).

The protein belongs to the class-I aminoacyl-tRNA synthetase family. In terms of assembly, monomer.

The protein localises to the cytoplasm. It catalyses the reaction tRNA(Arg) + L-arginine + ATP = L-arginyl-tRNA(Arg) + AMP + diphosphate. The sequence is that of Arginine--tRNA ligase from Agrobacterium fabrum (strain C58 / ATCC 33970) (Agrobacterium tumefaciens (strain C58)).